Consider the following 648-residue polypeptide: Forkhead box protein N1 (648 aa).

Positions 1–105 (MVSLPPPQSD…SDKYPGFGFE (105 aa)) are disordered. A compositionally biased stretch (pro residues) spans 58-67 (ERTPSLPPHS). The fork-head DNA-binding region spans 271-367 (KPIYSYSILI…EELQKWKRKD (97 aa)). Disordered stretches follow at residues 392-445 (LGSP…LLMG), 458-508 (LSPG…LLAE), and 623-648 (LEPTPPTAPAGPSVYLSPSSKPVALA). A compositionally biased stretch (pro residues) spans 462-473 (LAPPGPPQPLFP).

As to expression, expressed in thymus.

The protein resides in the nucleus. Transcriptional regulator which regulates the development, differentiation, and function of thymic epithelial cells (TECs) both in the prenatal and postnatal thymus. Acts as a master regulator of the TECs lineage development and is required from the onset of differentiation in progenitor TECs in the developing fetus to the final differentiation steps through which TECs mature to acquire their full functionality. Regulates, either directly or indirectly the expression of a variety of genes that mediate diverse aspects of thymus development and function, including MHC Class II, DLL4, CCL25, CTSL, CD40 and PAX1. Regulates the differentiation of the immature TECs into functional cortical TECs (cTECs) and medullary TECs (mTECs). Essential for maintenance of mTECs population in the postnatal thymus. Involved in the morphogenesis and maintenance of the three-dimensional thymic microstructure which is necessary for a fully functional thymus. Plays an important role in the maintenance of hematopoiesis and particularly T lineage progenitors within the bone marrow niche with age. Essential for the vascularization of the thymus anlage. Promotes the terminal differentiation of epithelial cells in the epidermis and hair follicles, partly by negatively regulating the activity of protein kinase C. Plays a crucial role in the early prenatal stages of T-cell ontogeny. This chain is Forkhead box protein N1 (FOXN1), found in Homo sapiens (Human).